The sequence spans 98 residues: NADH-ubiquinone oxidoreductase chain 4L (98 aa).

A run of 3 helical transmembrane segments spans residues 1–21 (MSMVYANIFMAFVVSLMGMLV), 29–49 (SLLCLEGMMLSLFVMMSVTIL), and 61–81 (IILLVFAACEAALGLSLLVMV).

This sequence belongs to the complex I subunit 4L family. In terms of assembly, core subunit of respiratory chain NADH dehydrogenase (Complex I) which is composed of 45 different subunits.

The protein resides in the mitochondrion inner membrane. The enzyme catalyses a ubiquinone + NADH + 5 H(+)(in) = a ubiquinol + NAD(+) + 4 H(+)(out). Core subunit of the mitochondrial membrane respiratory chain NADH dehydrogenase (Complex I) which catalyzes electron transfer from NADH through the respiratory chain, using ubiquinone as an electron acceptor. Part of the enzyme membrane arm which is embedded in the lipid bilayer and involved in proton translocation. The chain is NADH-ubiquinone oxidoreductase chain 4L (MT-ND4L) from Odobenus rosmarus rosmarus (Atlantic walrus).